A 335-amino-acid polypeptide reads, in one-letter code: tRNA-dihydrouridine(20/20a) synthase (335 aa).

Residues 19–21 (PMM) and Gln-72 contribute to the FMN site. Cys-102 (proton donor) is an active-site residue. Residues Lys-141, His-173, 213 to 215 (NGG), and 235 to 236 (GR) contribute to the FMN site.

Belongs to the Dus family. DusA subfamily. It depends on FMN as a cofactor.

It catalyses the reaction 5,6-dihydrouridine(20) in tRNA + NADP(+) = uridine(20) in tRNA + NADPH + H(+). The catalysed reaction is 5,6-dihydrouridine(20) in tRNA + NAD(+) = uridine(20) in tRNA + NADH + H(+). The enzyme catalyses 5,6-dihydrouridine(20a) in tRNA + NADP(+) = uridine(20a) in tRNA + NADPH + H(+). It carries out the reaction 5,6-dihydrouridine(20a) in tRNA + NAD(+) = uridine(20a) in tRNA + NADH + H(+). In terms of biological role, catalyzes the synthesis of 5,6-dihydrouridine (D), a modified base found in the D-loop of most tRNAs, via the reduction of the C5-C6 double bond in target uridines. Specifically modifies U20 and U20a in tRNAs. The chain is tRNA-dihydrouridine(20/20a) synthase from Xanthomonas campestris pv. campestris (strain ATCC 33913 / DSM 3586 / NCPPB 528 / LMG 568 / P 25).